Here is a 363-residue protein sequence, read N- to C-terminus: Dihydroorotate dehydrogenase (quinone) (363 aa).

FMN is bound by residues 67–71 (AGYDK) and Thr-91. A substrate-binding site is contributed by Lys-71. 116 to 120 (NRMGF) contributes to the substrate binding site. Positions 145 and 178 each coordinate FMN. Position 178 (Asn-178) interacts with substrate. The active-site Nucleophile is the Ser-181. Asn-183 contacts substrate. Residues Lys-224 and Thr-254 each coordinate FMN. 255–256 (NT) provides a ligand contact to substrate. FMN is bound by residues Gly-275, Gly-304, and 325-326 (YS).

The protein belongs to the dihydroorotate dehydrogenase family. Type 2 subfamily. Monomer. Requires FMN as cofactor.

The protein localises to the cell membrane. The catalysed reaction is (S)-dihydroorotate + a quinone = orotate + a quinol. It functions in the pathway pyrimidine metabolism; UMP biosynthesis via de novo pathway; orotate from (S)-dihydroorotate (quinone route): step 1/1. In terms of biological role, catalyzes the conversion of dihydroorotate to orotate with quinone as electron acceptor. The chain is Dihydroorotate dehydrogenase (quinone) from Acidithiobacillus ferrooxidans (strain ATCC 23270 / DSM 14882 / CIP 104768 / NCIMB 8455) (Ferrobacillus ferrooxidans (strain ATCC 23270)).